A 703-amino-acid polypeptide reads, in one-letter code: RING finger protein 214 (703 aa).

Disordered regions lie at residues 1–59, 104–134, and 146–197; these read MAAS…TITK, GSQS…VTRS, and SRNC…SSSL. Position 2 is an N-acetylalanine (Ala-2). Residues Ser-15, Ser-40, Ser-47, and Ser-54 each carry the phosphoserine modification. A compositionally biased stretch (polar residues) spans 37 to 59; that stretch reads TKDSAQKQKNSPLLSVSSQTITK. A phosphoserine mark is found at Ser-176 and Ser-196. The stretch at 220 to 379 forms a coiled coil; it reads QDIEKNLDKM…AEKEAELHLT (160 aa). The tract at residues 486–552 is disordered; the sequence is FPILNPALSQ…SAETPRPQPV (67 aa). The span at 493 to 504 shows a compositional bias: low complexity; it reads LSQPSQPSSPLP. A phosphoserine mark is found at Ser-497, Ser-511, and Ser-516. Residues 523–536 are compositionally biased toward pro residues; it reads PHMPPAASIPPPPG. The RING-type; atypical zinc-finger motif lies at 658–700; that stretch reads CLMCQKLVQPSELHPMACTHVLHKECIKFWAQTNTNDTCPFCP.

The sequence is that of RING finger protein 214 (RNF214) from Homo sapiens (Human).